Here is a 312-residue protein sequence, read N- to C-terminus: NAD(P)(+)--arginine ADP-ribosyltransferase 1 (312 aa).

A signal peptide spans 1 to 20; that stretch reads MELLALRWVLLAGTLLSTSA. The propeptide occupies 21-31; the sequence is ASSALQEGDLG. 2 disulfide bridges follow: C51–C260 and C159–C208. The TR mART core domain maps to 71-256; sequence IAYAVTWRQA…IQLHSKGKMS (186 aa). 3 residues coordinate NAD(+): Y108, R164, and Q183. R164 is a catalytic residue. Residue S186 is part of the active site. S217 is a binding site for NAD(+). E224 is a catalytic residue. Positions 267-312 are excised as a propeptide; the sequence is GGQWGRGHQEVGLGLSPGLSLPVLPCRRRVWEGLGHREGDPIPAAV.

Belongs to the Arg-specific ADP-ribosyltransferase family.

It localises to the secreted. The protein localises to the extracellular space. It carries out the reaction L-arginyl-[protein] + NAD(+) = N(omega)-(ADP-D-ribosyl)-L-arginyl-[protein] + nicotinamide + H(+). The polypeptide is NAD(P)(+)--arginine ADP-ribosyltransferase 1 (Gallus gallus (Chicken)).